The primary structure comprises 142 residues: MAKKVQAYIKLQVAAGQANPSPPVGPALGQHGVNIMEFCKAFNAQTQQLDAGAPVPVVITVYNDRSFTFTMKTPPAAYLLKKAAGIKSGSGEPNTKKVGKVTRAQLEEIAKAKEPDLTAADMDAAVRTIAGSARSMGLDVEG.

This sequence belongs to the universal ribosomal protein uL11 family. As to quaternary structure, part of the ribosomal stalk of the 50S ribosomal subunit. Interacts with L10 and the large rRNA to form the base of the stalk. L10 forms an elongated spine to which L12 dimers bind in a sequential fashion forming a multimeric L10(L12)X complex. One or more lysine residues are methylated.

Its function is as follows. Forms part of the ribosomal stalk which helps the ribosome interact with GTP-bound translation factors. The polypeptide is Large ribosomal subunit protein uL11 (Alcanivorax borkumensis (strain ATCC 700651 / DSM 11573 / NCIMB 13689 / SK2)).